Here is a 476-residue protein sequence, read N- to C-terminus: Membrane-bound lytic murein transglycosylase F (476 aa).

Residues 1 to 16 (MIKTLFIILLCGILSA) form the signal peptide. Positions 17-259 (CQPVDIQDVD…HLNEKYFGHV (243 aa)) are non-LT domain. Residues 260-476 (KRFDYVDTRA…VPAKSHVSAQ (217 aa)) form an LT domain region. Glu-304 is an active-site residue.

It in the N-terminal section; belongs to the bacterial solute-binding protein 3 family. The protein in the C-terminal section; belongs to the transglycosylase Slt family.

The protein resides in the cell outer membrane. It catalyses the reaction Exolytic cleavage of the (1-&gt;4)-beta-glycosidic linkage between N-acetylmuramic acid (MurNAc) and N-acetylglucosamine (GlcNAc) residues in peptidoglycan, from either the reducing or the non-reducing ends of the peptidoglycan chains, with concomitant formation of a 1,6-anhydrobond in the MurNAc residue.. In terms of biological role, murein-degrading enzyme that degrades murein glycan strands and insoluble, high-molecular weight murein sacculi, with the concomitant formation of a 1,6-anhydromuramoyl product. Lytic transglycosylases (LTs) play an integral role in the metabolism of the peptidoglycan (PG) sacculus. Their lytic action creates space within the PG sacculus to allow for its expansion as well as for the insertion of various structures such as secretion systems and flagella. This Shewanella frigidimarina (strain NCIMB 400) protein is Membrane-bound lytic murein transglycosylase F.